A 91-amino-acid polypeptide reads, in one-letter code: MSMDEGRLYKIIIRPVHSEKALNLIDKENTLTFIVDRNASKKDIKDAVELVFGVKVLKVRTLITSRGEKKAYVKLAPEHRASEIASQLGLI.

This sequence belongs to the universal ribosomal protein uL23 family. Part of the 50S ribosomal subunit. Contacts protein L29.

In terms of biological role, binds to 23S rRNA. One of the proteins that surrounds the polypeptide exit tunnel on the outside of the ribosome. The sequence is that of Large ribosomal subunit protein uL23 from Staphylothermus marinus (strain ATCC 43588 / DSM 3639 / JCM 9404 / F1).